Here is a 220-residue protein sequence, read N- to C-terminus: UPF0319 protein YccT (220 aa).

The N-terminal stretch at Met1–Ala20 is a signal peptide.

This sequence belongs to the UPF0319 family.

The polypeptide is UPF0319 protein YccT (Salmonella dublin (strain CT_02021853)).